A 78-amino-acid polypeptide reads, in one-letter code: Large ribosomal subunit protein bL28 (78 aa).

The protein belongs to the bacterial ribosomal protein bL28 family.

In Trichormus variabilis (strain ATCC 29413 / PCC 7937) (Anabaena variabilis), this protein is Large ribosomal subunit protein bL28.